The chain runs to 358 residues: DNA polymerase IV (358 aa).

One can recognise a UmuC domain in the interval 6-187 (IIHIDMDYFF…LDIGDFPGVG (182 aa)). Mg(2+)-binding residues include Asp-10 and Asp-105. Glu-106 is an active-site residue.

This sequence belongs to the DNA polymerase type-Y family. In terms of assembly, monomer. The cofactor is Mg(2+).

The protein resides in the cytoplasm. It carries out the reaction DNA(n) + a 2'-deoxyribonucleoside 5'-triphosphate = DNA(n+1) + diphosphate. Functionally, poorly processive, error-prone DNA polymerase involved in untargeted mutagenesis. Copies undamaged DNA at stalled replication forks, which arise in vivo from mismatched or misaligned primer ends. These misaligned primers can be extended by PolIV. Exhibits no 3'-5' exonuclease (proofreading) activity. May be involved in translesional synthesis, in conjunction with the beta clamp from PolIII. This chain is DNA polymerase IV, found in Staphylococcus haemolyticus (strain JCSC1435).